The primary structure comprises 141 residues: Hemoglobin subunit alpha (141 aa).

A Globin domain is found at 1 to 141 (VLSGEDKNNI…VSTVLTSKYR (141 aa)). Position 3 is a phosphoserine (Ser3). N6-succinyllysine occurs at positions 7 and 11. Position 16 is an N6-acetyllysine; alternate (Lys16). Position 16 is an N6-succinyllysine; alternate (Lys16). Tyr24 carries the post-translational modification Phosphotyrosine. Lys40 bears the N6-succinyllysine mark. Ser49 carries the phosphoserine modification. An O2-binding site is contributed by His58. His87 is a heme b binding site. Ser102 is modified (phosphoserine). Thr108 is modified (phosphothreonine). Ser124 and Ser131 each carry phosphoserine. 2 positions are modified to phosphothreonine: Thr134 and Thr137. At Ser138 the chain carries Phosphoserine.

This sequence belongs to the globin family. Heterotetramer of two alpha chains and two beta chains. As to expression, red blood cells.

Involved in oxygen transport from the lung to the various peripheral tissues. Its function is as follows. Hemopressin acts as an antagonist peptide of the cannabinoid receptor CNR1. Hemopressin-binding efficiently blocks cannabinoid receptor CNR1 and subsequent signaling. This Ondatra zibethicus (Muskrat) protein is Hemoglobin subunit alpha (HBA).